The primary structure comprises 288 residues: Quinate/shikimate dehydrogenase (288 aa).

Positions 71 and 107 each coordinate substrate. NAD(+) is bound by residues alanine 132–alanine 135, asparagine 155–aspartate 158, lysine 205, cysteine 232–asparagine 235, and glycine 255.

Belongs to the shikimate dehydrogenase family. As to quaternary structure, homodimer.

It carries out the reaction L-quinate + NAD(+) = 3-dehydroquinate + NADH + H(+). The catalysed reaction is L-quinate + NADP(+) = 3-dehydroquinate + NADPH + H(+). It catalyses the reaction shikimate + NADP(+) = 3-dehydroshikimate + NADPH + H(+). The enzyme catalyses shikimate + NAD(+) = 3-dehydroshikimate + NADH + H(+). Its pathway is metabolic intermediate biosynthesis; chorismate biosynthesis; chorismate from D-erythrose 4-phosphate and phosphoenolpyruvate: step 4/7. Functionally, the actual biological function of YdiB remains unclear, nor is it known whether 3-dehydroshikimate or quinate represents the natural substrate. Catalyzes the reversible NAD-dependent reduction of both 3-dehydroshikimate (DHSA) and 3-dehydroquinate to yield shikimate (SA) and quinate, respectively. It can use both NAD or NADP for catalysis, however it has higher catalytic efficiency with NAD. The polypeptide is Quinate/shikimate dehydrogenase (Escherichia coli O139:H28 (strain E24377A / ETEC)).